Reading from the N-terminus, the 4544-residue chain is Prolow-density lipoprotein receptor-related protein 1 (4544 aa).

The first 19 residues, 1-19, serve as a signal peptide directing secretion; the sequence is MLTPPLLLLLPLLSALVAA. At 20-4419 the chain is on the extracellular side; that stretch reads AIDAPKTCSP…EHVFSQQQPG (4400 aa). 2 consecutive LDL-receptor class A domains span residues 25-66 and 70-110; these read KTCS…ICPQ and QRCQ…HCRE. Cystine bridges form between Cys27–Cys40, Cys34–Cys53, Cys47–Cys64, Cys72–Cys85, Cys79–Cys98, and Cys92–Cys108. The EGF-like 1 domain occupies 111–149; it reads LQGNCSRLGCQHHCVPTLDGPTCYCNSSFQLQADGKTCK. Asn114 carries an N-linked (GlcNAc...) asparagine glycan. 6 cysteine pairs are disulfide-bonded: Cys115–Cys124, Cys120–Cys133, Cys135–Cys148, Cys154–Cys164, Cys160–Cys173, and Cys175–Cys188. Asn136 carries an N-linked (GlcNAc...) asparagine glycan. The region spanning 150–189 is the EGF-like 2; calcium-binding domain; sequence DFDECSVYGTCSQLCTNTDGSFICGCVEGYLLQPDNRSCK. N-linked (GlcNAc...) asparagine glycans are attached at residues Asn185, Asn239, and Asn274. LDL-receptor class B repeat units follow at residues 292 to 334, 335 to 378, and 379 to 422; these read GNFY…DPAM, GKVF…DLVS, and RLVY…FENY. N-linked (GlcNAc...) asparagine glycosylation occurs at Asn357. N-linked (GlcNAc...) asparagine glycosylation is present at Asn446. Residues 474-520 form the EGF-like 3 domain; the sequence is RSHACENDQYGKPGGCSDICLLANSHKARTCRCRSGFSLGSDGKSCK. 3 disulfide bridges follow: Cys478/Cys493, Cys489/Cys504, and Cys506/Cys519. LDL-receptor class B repeat units follow at residues 571-613, 614-659, 660-710, and 711-754; these read GFIY…DWMG, DNLY…DPLN, GWMY…DIPA, and GRLY…HGNY. Asn729 carries N-linked (GlcNAc...) (complex) asparagine glycosylation. An EGF-like 4 domain is found at 803–843; the sequence is GTNKCRVNNGGCSSLCLATPGSRQCACAEDQVLDADGVTCL. 33 cysteine pairs are disulfide-bonded: Cys807-Cys818, Cys814-Cys827, Cys829-Cys842, Cys854-Cys866, Cys861-Cys879, Cys873-Cys890, Cys895-Cys907, Cys902-Cys920, Cys914-Cys931, Cys936-Cys948, Cys943-Cys961, Cys955-Cys971, Cys976-Cys989, Cys984-Cys1002, Cys996-Cys1011, Cys1015-Cys1027, Cys1022-Cys1040, Cys1034-Cys1051, Cys1062-Cys1075, Cys1069-Cys1088, Cys1082-Cys1097, Cys1104-Cys1118, Cys1112-Cys1131, Cys1125-Cys1140, Cys1145-Cys1159, Cys1152-Cys1172, Cys1166-Cys1182, Cys1185-Cys1196, Cys1192-Cys1206, Cys1208-Cys1221, Cys1227-Cys1237, Cys1233-Cys1246, and Cys1248-Cys1261. LDL-receptor class A domains lie at 852-892, 893-933, 934-973, 974-1013, 1013-1053, 1060-1099, 1102-1142, and 1143-1182; these read PQCQ…LCHQ, HTCP…TCSA, RTCPPNQFSCASGRCIPISWTCDLDDDCGDRSDESASCAY, PTCFPLTQFTCNNGRCININWRCDNDNDCGDNSDEAGCSH, HSCS…NCTN, GGCHTDEFQCRLDGLCIPLRWRCDGDTDCMDSSDEKSCEG, HVCD…NCES, and LACRPPSHPCANNTSVCLPPDKLCDGNDDCGDGSDEGELC. Residues Trp871, Asp874, Asp876, Asp878, Asp884, and Glu885 each coordinate Ca(2+). Asn928 carries N-linked (GlcNAc...) asparagine glycosylation. Residues Trp1032, Asp1035, Asp1037, Asp1039, Asp1045, and Glu1046 each contribute to the Ca(2+) site. Asn1050 carries an N-linked (GlcNAc...) asparagine glycan. The Ca(2+) site is built by Trp1080, Asp1083, Asp1085, Asp1087, Asp1093, and Glu1094. Asn1154 and Asn1155 each carry an N-linked (GlcNAc...) asparagine glycan. 2 EGF-like domains span residues 1183–1222 and 1223–1262; these read DQCSLNNGGCSHNCSVAPGEGIVCSCPLGMELGPDNHTCQ and IQSYCAKHLKCSQKCDQNKFSVKCSCYEGWVLEPDGESCR. N-linked (GlcNAc...) asparagine glycosylation is found at Asn1195 and Asn1218. 5 LDL-receptor class B repeats span residues 1309-1355, 1356-1398, 1399-1445, 1446-1490, and 1491-1531; these read SALY…DWIA, GNIY…DPRD, GILF…DYLE, KRIL…YGGE, and VYWT…YHPS. Residue Asn1511 is glycosylated (N-linked (GlcNAc...) (complex) asparagine). One can recognise an EGF-like 7 domain in the interval 1536-1579; the sequence is APNPCEANGGQGPCSHLCLINYNRTVSCACPHLMKLHKDNTTCY. Disulfide bonds link Cys1540-Cys1553, Cys1549-Cys1563, and Cys1565-Cys1578. N-linked (GlcNAc...) asparagine glycosylation is found at Asn1558, Asn1575, Asn1616, and Asn1645. LDL-receptor class B repeat units follow at residues 1627–1669, 1670–1713, 1714–1753, and 1754–1798; these read QRVY…DWVS, RNLF…HPLR, GKLYWTDGDNISMANMDGSNRTLLFSGQKGPVGLAIDFPE, and SKLY…MGDK. Residues Asn1723, Asn1733, Asn1763, and Asn1825 are each glycosylated (N-linked (GlcNAc...) asparagine). One can recognise an EGF-like 8 domain in the interval 1846-1887; the sequence is GTNPCSVNNGDCSQLCLPTSETTRSCMCTAGYSLRSGQQACE. 3 disulfides stabilise this stretch: Cys1850/Cys1861, Cys1857/Cys1871, and Cys1873/Cys1886. Asn1933 is a glycosylation site (N-linked (GlcNAc...) asparagine). LDL-receptor class B repeat units lie at residues 1934–1976, 1977–2019, 2020–2063, and 2064–2107; these read DTIY…DWIA, GNIY…HPEK, GYLF…DYQD, and GKLY…FEDF. Asn1995 carries an N-linked (GlcNAc...) asparagine glycan. Position 2009 is an N6-acetyllysine (Lys2009). N-linked (GlcNAc...) asparagine glycosylation occurs at Asn2048. N-linked (GlcNAc...) asparagine glycosylation is found at Asn2117 and Asn2127. Positions 2155 to 2195 constitute an EGF-like 9 domain; it reads GTNVCAVANGGCQQLCLYRGRGQRACACAHGMLAEDGASCR. 3 cysteine pairs are disulfide-bonded: Cys2159/Cys2170, Cys2166/Cys2180, and Cys2182/Cys2194. LDL-receptor class B repeat units lie at residues 2253-2294, 2295-2343, 2344-2388, 2389-2431, and 2432-2473; these read NRIF…HRGW, DTLY…DECQ, NLMF…DHRA, EKLY…YGEH, and IFWT…VAND. Asn2472 is a glycosylation site (N-linked (GlcNAc...) asparagine). One can recognise an EGF-like 10 domain in the interval 2478–2518; it reads ELSPCRINNGGCQDLCLLTHQGHVNCSCRGGRILQDDLTCR. 3 cysteine pairs are disulfide-bonded: Cys2482–Cys2493, Cys2489–Cys2503, and Cys2505–Cys2517. Asn2502 carries an N-linked (GlcNAc...) asparagine glycan. Asn2521 is a glycosylation site (N-linked (GlcNAc...) asparagine). LDL-receptor class A domains are found at residues 2522-2563, 2564-2602, 2603-2641, 2642-2690, 2694-2732, 2732-2771, and 2772-2814; these read SSCR…YCNS, RRCKKTFRQCSNGRCVSNMLWCNGADDCGDGSDEIPCNK, TACGVGEFRCRDGTCIGNSSRCNQFVDCEDASDEMNCSA, TDCS…DCPG, PRCPLNYFACPSGRCIPMSWTCDKEDDCEHGEDETHCNK, KFCSEAQFECQNHRCISKQWLCDGSDDCGDGSDEAAHCEG, and KTCG…GCLY. 6 disulfides stabilise this stretch: Cys2524–Cys2537, Cys2532–Cys2550, Cys2544–Cys2561, Cys2566–Cys2578, Cys2573–Cys2591, and Cys2585–Cys2600. A glycan (N-linked (GlcNAc...) asparagine) is linked at Asn2539. An N-linked (GlcNAc...) asparagine glycan is attached at Asn2601. 15 cysteine pairs are disulfide-bonded: Cys2605–Cys2617, Cys2612–Cys2630, Cys2624–Cys2639, Cys2644–Cys2666, Cys2660–Cys2679, Cys2673–Cys2688, Cys2696–Cys2708, Cys2703–Cys2721, Cys2715–Cys2730, Cys2734–Cys2746, Cys2741–Cys2759, Cys2753–Cys2769, Cys2774–Cys2787, Cys2781–Cys2800, and Cys2794–Cys2812. N-linked (GlcNAc...) asparagine glycosylation is found at Asn2620 and Asn2638. N-linked (GlcNAc...) asparagine glycosylation is present at Asn2815. 3 LDL-receptor class A domains span residues 2816–2855, 2856–2899, and 2902–2940; these read STCDDREFMCQNRQCIPKHFVCDHDRDCADGSDESPECEY, PTCG…HCTS, and HKCNASSQFLCSSGRCVAEALLCNGQDDCGDSSDERGCH. Intrachain disulfides connect Cys2818-Cys2830, Cys2825-Cys2843, Cys2837-Cys2853, Cys2858-Cys2870, Cys2865-Cys2884, Cys2878-Cys2897, Cys2904-Cys2917, Cys2912-Cys2930, Cys2924-Cys2939, Cys2944-Cys2956, Cys2952-Cys2965, Cys2967-Cys2980, Cys2986-Cys2996, Cys2992-Cys3005, and Cys3007-Cys3021. N-linked (GlcNAc...) asparagine glycosylation occurs at Asn2905. Positions 2941-2981 constitute an EGF-like 11 domain; the sequence is INECLSRKLSGCSQDCEDLKIGFKCRCRPGFRLKDDGRTCA. Residues 2982-3022 form the EGF-like 12; calcium-binding domain; that stretch reads DVDECSTTFPCSQRCINTHGSYKCLCVEGYAPRGGDPHSCK. Asn3048 and Asn3089 each carry an N-linked (GlcNAc...) asparagine glycan. LDL-receptor class B repeat units lie at residues 3069–3113, 3114–3156, 3157–3200, 3201–3243, and 3244–3284; these read QMIY…DWVG, GNLY…DVQN, GYLY…DYVT, ERIY…FEDY, and VYWT…FHAL. Residue Asn3264 is glycosylated (N-linked (GlcNAc...) asparagine). Residues 3290-3331 enclose the EGF-like 13 domain; the sequence is PNHPCKVNNGGCSNLCLLSPGGGHKCACPTNFYLGSDGRTCV. 3 disulfide bridges follow: Cys3294/Cys3305, Cys3301/Cys3315, and Cys3317/Cys3330. LDL-receptor class A domains lie at 3332-3371, 3372-3410, 3411-3450, 3451-3491, 3492-3533, 3534-3572, 3573-3611, 3611-3649, 3652-3692, 3693-3733, and 3739-3778; these read SNCTASQFVCKNDKCIPFWWKCDTEDDCGDHSDEPPDCPE, FKCRPGQFQCSTGICTNPAFICDGDNDCQDNSDEANCDI, HVCLPSQFKCTNTNRCIPGIFRCNGQDNCGDGEDERDCPE, VTCA…NCTQ, MTCG…ECDE, RTCEPYQFRCKNNRCVPGRWQCDYDNDCGDNSDEESCTP, RPCSESEFSCANGRCIAGRWKCDGDHDCADGSDEKDCTP, PRCDMDQFQCKSGHCIPLRWRCDADADCMDGSDEEACGT, RTCP…ECAR, FVCP…DCEP, and THCKDKKEFLCRNQRCLSSSLRCNMFDDCGDGSDEEDCSI. Residue Asn3333 is glycosylated (N-linked (GlcNAc...) asparagine). Disulfide bonds link Cys3334/Cys3346, Cys3341/Cys3359, Cys3353/Cys3369, Cys3374/Cys3386, Cys3381/Cys3399, Cys3393/Cys3408, Cys3413/Cys3426, Cys3420/Cys3439, Cys3433/Cys3448, Cys3453/Cys3466, Cys3460/Cys3479, Cys3473/Cys3489, Cys3494/Cys3507, Cys3501/Cys3520, Cys3514/Cys3531, Cys3536/Cys3548, Cys3543/Cys3561, Cys3555/Cys3570, Cys3575/Cys3587, Cys3582/Cys3600, Cys3594/Cys3609, Cys3613/Cys3625, Cys3620/Cys3638, Cys3632/Cys3647, Cys3654/Cys3666, Cys3661/Cys3679, Cys3673/Cys3690, Cys3695/Cys3709, Cys3703/Cys3722, Cys3716/Cys3731, Cys3741/Cys3754, Cys3749/Cys3767, Cys3761/Cys3776, Cys3785/Cys3798, Cys3792/Cys3807, Cys3809/Cys3822, Cys3828/Cys3838, Cys3834/Cys3847, and Cys3849/Cys3860. Asn3488 carries N-linked (GlcNAc...) asparagine glycosylation. Asn3662 is a glycosylation site (N-linked (GlcNAc...) asparagine). 2 EGF-like domains span residues 3781 to 3823 and 3824 to 3861; these read KLTS…PGCQ and DINECLRFGTCSQLCNNTKGGHLCSCARNFMKTHNTCK. Residue Asn3788 is glycosylated (N-linked (GlcNAc...) asparagine). N-linked (GlcNAc...) asparagine glycosylation is present at Asn3839. LDL-receptor class B repeat units follow at residues 3912-3954, 3970-4012, 4013-4056, and 4057-4101; these read GRVY…HLNI, GNVY…DPLR, GTMY…DYHN, and ERLY…FEDY. The Recognition site for proteolytical processing signature appears at 3940-3943; the sequence is RHRR. Asn3953 carries an N-linked (GlcNAc...) asparagine glycan. Asn4075 and Asn4125 each carry an N-linked (GlcNAc...) asparagine glycan. EGF-like domains are found at residues 4147–4183, 4196–4232, 4232–4268, 4268–4304, 4304–4340, 4340–4375, and 4373–4409; these read VTNPCDRKKCEWLCLLSPSGPVCTCPNGKRLDNGTCV, RPGTCNLQCFNGGSCFLNARRQPKCRCQPRYTGDKCE, ELDQCWEHCRNGGTCAASPSGMPTCRCPTGFTGPKCT, TQQVCAGYCANNSTCTVNQGNQPQCRCLPGFLGDRCQ, QYRQCSGYCENFGTCQMAADGSRQCRCTAYFEGSRCE, EVNKCSRCLEGACVVNKQSGDVTCNCTDGRVAPSCL, and SCLTCVGHCSNGGSCTMNSKMMPECQCPPHMTGPRCE. 17 cysteine pairs are disulfide-bonded: Cys4151-Cys4160, Cys4156-Cys4169, Cys4171-Cys4182, Cys4200-Cys4210, Cys4204-Cys4220, Cys4222-Cys4231, Cys4236-Cys4246, Cys4240-Cys4256, Cys4258-Cys4267, Cys4272-Cys4282, Cys4276-Cys4292, Cys4294-Cys4303, Cys4308-Cys4318, Cys4312-Cys4328, Cys4330-Cys4339, Cys4344-Cys4352, and Cys4347-Cys4363. A glycan (N-linked (GlcNAc...) asparagine) is linked at Asn4179. N-linked (GlcNAc...) asparagine glycosylation is found at Asn4278 and Asn4279. A glycan (N-linked (GlcNAc...) asparagine) is linked at Asn4364. 4 cysteine pairs are disulfide-bonded: Cys4365/Cys4374, Cys4377/Cys4387, Cys4381/Cys4397, and Cys4399/Cys4408. A helical transmembrane segment spans residues 4420–4444; sequence HIASILIPLLLLLLLVLVAGVVFWY. The Cytoplasmic portion of the chain corresponds to 4445–4544; that stretch reads KRRVQGAKGF…PEDEIGDPLA (100 aa). The segment at 4445-4544 is interaction with MAFB; sequence KRRVQGAKGF…PEDEIGDPLA (100 aa). Phosphothreonine is present on Thr4460. An NPXY motif motif is present at residues 4502–4507; that stretch reads FTNPVY. At Tyr4507 the chain carries Phosphotyrosine. 3 positions are modified to phosphoserine: Ser4517, Ser4520, and Ser4523.

The protein belongs to the LDLR family. In terms of assembly, heterodimer of an 85-kDa membrane-bound carboxyl subunit and a non-covalently attached 515-kDa N-terminal subunit. Intracellular domain interacts with MAFB. Found in a complex with PID1/PCLI1, LRP1 and CUBNI. Interacts with SNX17, PID1/PCLI1, PDGF and CUBN. The intracellular domain interacts with SHC1, GULP1 and DAB1. Can weakly interact (via NPXY motif) with DAB2 (via PID domain); the interaction is enhanced by tyrosine phosphorylation of the NPXY motif. Interacts with MDK; promotes neuronal survival. Interacts with LRPAP1; this interaction is followed by rapid internalization. Interacts with uPA/PLAU and PAI1/SERPINE1, either individually or in complex with each other, leading to rapid endocytosis; this interaction is abolished in the presence of LRPAP1/RAP. Also interacts with tPA/PLAT alone or in complex with SERPINE1. Interacts with the urokinase receptor PLAUR; this interaction leads to PLAUR internalization and is impaired in the presence of SORL1. Interacts with PDGFB. Interacts with TAU/MAPT, leading to endocytosis; this interaction is reduced in the presence of LRPAP1/RAP. Interacts with IGFBP3; this interaction mediates cell growth inhibition independently of IGF1. Interacts with ADGRG6. As to quaternary structure, (Microbial infection) Interacts with bacterial exotoxins. (Microbial infection) Interacts with Rift valley fever virus (RVFV) glycoprotein N; this interaction facilitates virus entry. Post-translationally, cleaved into a 85 kDa membrane-spanning subunit (LRP-85) and a 515 kDa large extracellular domain (LRP-515) that remains non-covalently associated. Gamma-secretase-dependent cleavage of LRP-85 releases the intracellular domain from the membrane. In terms of processing, the N-terminus is blocked. Phosphorylated on serine and threonine residues. Post-translationally, phosphorylated on tyrosine residues upon stimulation with PDGF. Tyrosine phosphorylation promotes interaction with SHC1. As to expression, most abundant in liver, brain and lung.

It localises to the cell membrane. Its subcellular location is the membrane. The protein resides in the coated pit. The protein localises to the cytoplasm. It is found in the nucleus. It localises to the golgi outpost. Its subcellular location is the cytoskeleton. The protein resides in the microtubule organizing center. Endocytic receptor involved in endocytosis and in phagocytosis of apoptotic cells. Required for early embryonic development. Involved in cellular lipid homeostasis. Involved in the plasma clearance of chylomicron remnants and activated LRPAP1 (alpha 2-macroglobulin), as well as the local metabolism of complexes between plasminogen activators and their endogenous inhibitors. Acts as an LRPAP1 alpha-2-macroglobulin receptor. Acts as TAU/MAPT receptor and controls the endocytosis of TAU/MAPT as well as its subsequent spread. May modulate cellular events, such as APP metabolism, kinase-dependent intracellular signaling, neuronal calcium signaling as well as neurotransmission. Also acts as a receptor for IGFBP3 to mediate cell growth inhibition. In terms of biological role, (Microbial infection) Functions as a receptor for Pseudomonas aeruginosa exotoxin A. The polypeptide is Prolow-density lipoprotein receptor-related protein 1 (Homo sapiens (Human)).